The sequence spans 184 residues: NEDD8-conjugating enzyme UBC12 (184 aa).

Residues 10–29 are disordered; the sequence is EKQRQAAQAQAPAQGRSAAS. Positions 14 to 29 are enriched in low complexity; sequence QAAQAQAPAQGRSAAS. The region spanning 30 to 174 is the UBC core domain; the sequence is PAQLRVEKDL…VQATMMGGHL (145 aa). Cys-112 (glycyl thioester intermediate) is an active-site residue.

Belongs to the ubiquitin-conjugating enzyme family. UBC12 subfamily.

The catalysed reaction is [E1 NEDD8-activating enzyme]-S-[NEDD8 protein]-yl-L-cysteine + [E2 NEDD8-conjugating enzyme]-L-cysteine = [E1 NEDD8-activating enzyme]-L-cysteine + [E2 NEDD8-conjugating enzyme]-S-[NEDD8-protein]-yl-L-cysteine.. Its pathway is protein modification; protein neddylation. Functionally, accepts the ubiquitin-like protein NEDD8/RUB1 from the UBA3-ULA1 E1 complex and catalyzes its covalent attachment to other proteins. This chain is NEDD8-conjugating enzyme UBC12 (UBC12), found in Eremothecium gossypii (strain ATCC 10895 / CBS 109.51 / FGSC 9923 / NRRL Y-1056) (Yeast).